The chain runs to 214 residues: High frequency lysogenization protein HflD homolog (214 aa).

It belongs to the HflD family.

The protein localises to the cytoplasm. It is found in the cell inner membrane. The polypeptide is High frequency lysogenization protein HflD homolog (Chromohalobacter salexigens (strain ATCC BAA-138 / DSM 3043 / CIP 106854 / NCIMB 13768 / 1H11)).